The chain runs to 414 residues: Gamma-glutamyl phosphate reductase (414 aa).

It belongs to the gamma-glutamyl phosphate reductase family.

It localises to the cytoplasm. It carries out the reaction L-glutamate 5-semialdehyde + phosphate + NADP(+) = L-glutamyl 5-phosphate + NADPH + H(+). Its pathway is amino-acid biosynthesis; L-proline biosynthesis; L-glutamate 5-semialdehyde from L-glutamate: step 2/2. Its function is as follows. Catalyzes the NADPH-dependent reduction of L-glutamate 5-phosphate into L-glutamate 5-semialdehyde and phosphate. The product spontaneously undergoes cyclization to form 1-pyrroline-5-carboxylate. This Alkaliphilus metalliredigens (strain QYMF) protein is Gamma-glutamyl phosphate reductase.